Here is a 426-residue protein sequence, read N- to C-terminus: Serine--tRNA ligase (426 aa).

230–232 (TAE) serves as a coordination point for L-serine. Residue 261–263 (RSE) participates in ATP binding. Glu-284 is an L-serine binding site. 348–351 (EISS) contacts ATP. Ser-384 serves as a coordination point for L-serine.

The protein belongs to the class-II aminoacyl-tRNA synthetase family. Type-1 seryl-tRNA synthetase subfamily. In terms of assembly, homodimer. The tRNA molecule binds across the dimer.

Its subcellular location is the cytoplasm. The enzyme catalyses tRNA(Ser) + L-serine + ATP = L-seryl-tRNA(Ser) + AMP + diphosphate + H(+). It carries out the reaction tRNA(Sec) + L-serine + ATP = L-seryl-tRNA(Sec) + AMP + diphosphate + H(+). Its pathway is aminoacyl-tRNA biosynthesis; selenocysteinyl-tRNA(Sec) biosynthesis; L-seryl-tRNA(Sec) from L-serine and tRNA(Sec): step 1/1. In terms of biological role, catalyzes the attachment of serine to tRNA(Ser). Is also able to aminoacylate tRNA(Sec) with serine, to form the misacylated tRNA L-seryl-tRNA(Sec), which will be further converted into selenocysteinyl-tRNA(Sec). The protein is Serine--tRNA ligase of Phenylobacterium zucineum (strain HLK1).